Here is a 183-residue protein sequence, read N- to C-terminus: Potassium-transporting ATPase KdpC subunit (183 aa).

A helical membrane pass occupies residues 11 to 31; it reads LALLMTLLTGVLYPLAVTGVA.

This sequence belongs to the KdpC family. The system is composed of three essential subunits: KdpA, KdpB and KdpC.

It localises to the cell inner membrane. Functionally, part of the high-affinity ATP-driven potassium transport (or Kdp) system, which catalyzes the hydrolysis of ATP coupled with the electrogenic transport of potassium into the cytoplasm. This subunit acts as a catalytic chaperone that increases the ATP-binding affinity of the ATP-hydrolyzing subunit KdpB by the formation of a transient KdpB/KdpC/ATP ternary complex. This is Potassium-transporting ATPase KdpC subunit from Pseudomonas putida (strain GB-1).